Consider the following 198-residue polypeptide: Iron-sulfur flavoprotein MJ0731 (198 aa).

[4Fe-4S] cluster contacts are provided by Cys46, Cys49, Cys52, and Cys59.

It belongs to the SsuE family. Isf subfamily. Homodimer. FMN is required as a cofactor. [4Fe-4S] cluster serves as cofactor.

Functionally, redox-active protein probably involved in electron transport. This chain is Iron-sulfur flavoprotein MJ0731, found in Methanocaldococcus jannaschii (strain ATCC 43067 / DSM 2661 / JAL-1 / JCM 10045 / NBRC 100440) (Methanococcus jannaschii).